The sequence spans 347 residues: Ribosomal RNA small subunit methyltransferase H (347 aa).

Residues 50–52, aspartate 69, phenylalanine 96, aspartate 125, and glutamine 132 each bind S-adenosyl-L-methionine; that span reads GGH.

It belongs to the methyltransferase superfamily. RsmH family.

It is found in the cytoplasm. The enzyme catalyses cytidine(1402) in 16S rRNA + S-adenosyl-L-methionine = N(4)-methylcytidine(1402) in 16S rRNA + S-adenosyl-L-homocysteine + H(+). Its function is as follows. Specifically methylates the N4 position of cytidine in position 1402 (C1402) of 16S rRNA. The sequence is that of Ribosomal RNA small subunit methyltransferase H from Corynebacterium aurimucosum (strain ATCC 700975 / DSM 44827 / CIP 107346 / CN-1) (Corynebacterium nigricans).